Here is a 110-residue protein sequence, read N- to C-terminus: Inner membrane protein H108R (110 aa).

Residues 10-32 (LIVIITILITTRELSTTMLIVSL) form a helical membrane-spanning segment.

This sequence belongs to the asfivirus H108R family.

Its subcellular location is the virion membrane. The sequence is that of Inner membrane protein H108R from African swine fever virus (isolate Pig/Kenya/KEN-50/1950) (ASFV).